We begin with the raw amino-acid sequence, 56 residues long: Small ribosomal subunit protein uS14 (56 aa).

Residues Cys21, Cys24, Cys39, and Cys42 each coordinate Zn(2+).

It belongs to the universal ribosomal protein uS14 family. Component of the 40S small ribosomal subunit. The cofactor is Zn(2+).

Its subcellular location is the cytoplasm. The protein resides in the cytosol. The protein localises to the rough endoplasmic reticulum. The chain is Small ribosomal subunit protein uS14 (RpS29) from Ixodes scapularis (Black-legged tick).